Reading from the N-terminus, the 309-residue chain is Taste receptor type 2 member 8 (309 aa).

The Extracellular portion of the chain corresponds to 1–7 (MFSPADN). A helical transmembrane segment spans residues 8 to 28 (IFIILITGEFILGILGNGYIA). Over 29–50 (LVNWIDWIKKKKISTTDYILTN) the chain is Cytoplasmic. Residues 51–71 (LVISRICLISVIVVNGIVTVL) form a helical membrane-spanning segment. Topologically, residues 72 to 82 (YPDVYTKSKLQ) are extracellular. The helical transmembrane segment at 83-103 (IAISTFWTFANYLNMWFTTCL) threads the bilayer. At 104-131 (NVFYFLKIANSSHPLFLWLKQKIDMVVR) the chain is on the cytoplasmic side. Residues 132–152 (WILLGCFAISLLVSLIIAIVL) traverse the membrane as a helical segment. At 153–184 (SRDYRFHAIAKHKRNITEMFHVSKMLYFEPLT) the chain is on the extracellular side. Residue asparagine 167 is glycosylated (N-linked (GlcNAc...) asparagine). Residues 185–205 (LFNLLAIVPFIVSLMSFFLLV) traverse the membrane as a helical segment. The Cytoplasmic portion of the chain corresponds to 206-239 (RSLQRHTKQIKLYATGGRDPSTEAHVRAIKTMTS). The helical transmembrane segment at 240-260 (FIFFFFLYYITSLLVTFSYLM) threads the bilayer. Residues 261–266 (TKYKLA) are Extracellular-facing. The chain crosses the membrane as a helical span at residues 267–287 (MAFGEIVAILYPSGHSFILII). Over 288–309 (LNNKLRQASVRMLTCIKITCVI) the chain is Cytoplasmic.

It belongs to the G-protein coupled receptor T2R family.

Its subcellular location is the membrane. Its function is as follows. Receptor that may play a role in the perception of bitterness and is gustducin-linked. May play a role in sensing the chemical composition of the gastrointestinal content. The activity of this receptor may stimulate alpha gustducin, mediate PLC-beta-2 activation and lead to the gating of TRPM5. This Pongo pygmaeus (Bornean orangutan) protein is Taste receptor type 2 member 8 (TAS2R8).